A 105-amino-acid polypeptide reads, in one-letter code: NADH-quinone oxidoreductase subunit K (105 aa).

Helical transmembrane passes span 9–29, 34–54, and 65–85; these read PNYY…GVLV, IVLF…LVTF, and IIAF…LAII.

The protein belongs to the complex I subunit 4L family. As to quaternary structure, NDH-1 is composed of 14 different subunits. Subunits NuoA, H, J, K, L, M, N constitute the membrane sector of the complex.

Its subcellular location is the cell membrane. The catalysed reaction is a quinone + NADH + 5 H(+)(in) = a quinol + NAD(+) + 4 H(+)(out). Functionally, NDH-1 shuttles electrons from NADH, via FMN and iron-sulfur (Fe-S) centers, to quinones in the respiratory chain. The immediate electron acceptor for the enzyme in this species is believed to be a menaquinone. Couples the redox reaction to proton translocation (for every two electrons transferred, four hydrogen ions are translocated across the cytoplasmic membrane), and thus conserves the redox energy in a proton gradient. This is NADH-quinone oxidoreductase subunit K from Salinispora arenicola (strain CNS-205).